The chain runs to 209 residues: ATP-dependent Clp protease proteolytic subunit 2 (209 aa).

The Nucleophile role is filled by serine 107. Histidine 132 is a catalytic residue.

Belongs to the peptidase S14 family. In terms of assembly, fourteen ClpP subunits assemble into 2 heptameric rings which stack back to back to give a disk-like structure with a central cavity, resembling the structure of eukaryotic proteasomes.

The protein resides in the cytoplasm. The enzyme catalyses Hydrolysis of proteins to small peptides in the presence of ATP and magnesium. alpha-casein is the usual test substrate. In the absence of ATP, only oligopeptides shorter than five residues are hydrolyzed (such as succinyl-Leu-Tyr-|-NHMec, and Leu-Tyr-Leu-|-Tyr-Trp, in which cleavage of the -Tyr-|-Leu- and -Tyr-|-Trp bonds also occurs).. Cleaves peptides in various proteins in a process that requires ATP hydrolysis. Has a chymotrypsin-like activity. Plays a major role in the degradation of misfolded proteins. This chain is ATP-dependent Clp protease proteolytic subunit 2, found in Corynebacterium jeikeium (strain K411).